A 1382-amino-acid polypeptide reads, in one-letter code: DNA-directed RNA polymerase subunit beta (1382 aa).

The protein belongs to the RNA polymerase beta chain family. In terms of assembly, the RNAP catalytic core consists of 2 alpha, 1 beta, 1 beta' and 1 omega subunit. When a sigma factor is associated with the core the holoenzyme is formed, which can initiate transcription.

It catalyses the reaction RNA(n) + a ribonucleoside 5'-triphosphate = RNA(n+1) + diphosphate. In terms of biological role, DNA-dependent RNA polymerase catalyzes the transcription of DNA into RNA using the four ribonucleoside triphosphates as substrates. This is DNA-directed RNA polymerase subunit beta from Aliarcobacter butzleri (strain RM4018) (Arcobacter butzleri).